The following is a 348-amino-acid chain: MSIPTTQKGVIFYENGGQLYYKDIPVPKPKSNELLINVKYSGVCHTDLHAWKGDWPLDTKLPLVGGHEGAGVVVAMGDNVKGWKIGDLAGIKWLNGSCMNCEECELSNESNCPDADLSGYTHDGSFQQYATADAVQAAHIPAGTDLAQVAPILCAGVTVYKALKTAEMKAGDWVAISGAAGGLGSLAVQYAKAMGFRVLGIDGGEGKEELFKSLGGEVFIDFTKSKDIVGEVIKATNGGAHGVINVSVSEKAIESSIEYCRSNGTVVLVGLPKDAKCKSDVFNQVVKSIHIVGSYVGNRADTREALDFFCRGLVNAPIKVVGLSTLPEIYEKMEQGKVLGRYVVDTSK.

The residue at position 2 (S2) is an N-acetylserine. Zn(2+) is bound by residues C44, H67, C98, C101, C104, C112, and C154. Residues 178-184 (GAAGGLG), D202, K207, 269-271 (VGL), and R341 contribute to the NAD(+) site.

The protein belongs to the zinc-containing alcohol dehydrogenase family. Homotetramer. Zn(2+) serves as cofactor.

It is found in the cytoplasm. The enzyme catalyses a primary alcohol + NAD(+) = an aldehyde + NADH + H(+). The catalysed reaction is a secondary alcohol + NAD(+) = a ketone + NADH + H(+). This is Alcohol dehydrogenase 2 (ADH2) from Kluyveromyces marxianus (Yeast).